The primary structure comprises 373 residues: Glutamine synthetase (373 aa).

Residue A2 is modified to N-acetylalanine. The interval A2–K25 is required for glutamine-induced ubiquitination by CRL4(CRBN) and proteasomal degradation. N6-acetyllysine occurs at positions 11 and 14. Residues V26–R106 enclose the GS beta-grasp domain. A Phosphotyrosine modification is found at Y104. The GS catalytic domain maps to L113–N373. E134 lines the ATP pocket. Mn(2+) contacts are provided by E134, E136, E196, and E203. ATP is bound at residue E203–P208. Residue N246–W247 coordinates L-glutamate. H253 contacts Mn(2+). Residues N255 to S257, R319, and R324 each bind ATP. R319 contributes to the L-glutamate binding site. Y336 to E338 provides a ligand contact to ADP. Mn(2+) is bound at residue E338. R340 lines the L-glutamate pocket. S343 carries the post-translational modification Phosphoserine.

It belongs to the glutamine synthetase family. In terms of assembly, decamer; composed of two pentamers. Interacts with PALMD. Interacts with RHOJ. Interacts with BEST2; this interaction tethers a fraction of GLUL to the membrane, causing a decrease of cytosolic glutamine synthase (GS) activity and inhibits the chloride channel activity of BEST2 by affecting the gating at the aperture in the absence of intracellular glutamate. Mg(2+) is required as a cofactor. The cofactor is Mn(2+). Post-translationally, palmitoylated; undergoes autopalmitoylation. In terms of processing, acetylated by EP300/p300; acetylation is stimulated by increased glutamine levels and promotes ubiquitin-mediated proteasomal degradation. Ubiquitinated by ZNRF1. Ubiquitinated by the DCX (DDB1-CUL4-X-box) E3 ubiquitin-protein ligase complex called CRL4(CRBN), leading to proteasomal degradation.

Its subcellular location is the cytoplasm. It localises to the cytosol. It is found in the microsome. The protein localises to the mitochondrion. The protein resides in the cell membrane. It catalyses the reaction L-glutamate + NH4(+) + ATP = L-glutamine + ADP + phosphate + H(+). The enzyme catalyses L-cysteinyl-[protein] + hexadecanoyl-CoA = S-hexadecanoyl-L-cysteinyl-[protein] + CoA. With respect to regulation, glutamine synthetase activity is inhibited by methionine sulfoximine (MSO). In terms of biological role, glutamine synthetase that catalyzes the ATP-dependent conversion of glutamate and ammonia to glutamine. Its role depends on tissue localization: in the brain, it regulates the levels of toxic ammonia and converts neurotoxic glutamate to harmless glutamine, whereas in the liver, it is one of the enzymes responsible for the removal of ammonia. Plays a key role in ammonium detoxification during erythropoiesis: the glutamine synthetase activity is required to remove ammonium generated by porphobilinogen deaminase (HMBS) during heme biosynthesis to prevent ammonium accumulation and oxidative stress. Essential for proliferation of fetal skin fibroblasts. Independently of its glutamine synthetase activity, required for endothelial cell migration during vascular development. Involved in angiogenesis by regulating membrane localization and activation of the GTPase RHOJ, possibly by promoting RHOJ palmitoylation. May act as a palmitoyltransferase for RHOJ: able to autopalmitoylate and then transfer the palmitoyl group to RHOJ. Plays a role in ribosomal 40S subunit biogenesis. Through the interaction with BEST2, inhibits BEST2 channel activity by affecting the gating at the aperture in the absence of intracellular L-glutamate, but sensitizes BEST2 to intracellular L-glutamate, which promotes the opening of BEST2 and thus relieves its inhibitory effect on BEST2. In Bos taurus (Bovine), this protein is Glutamine synthetase.